Consider the following 176-residue polypeptide: NAD(P)H-quinone oxidoreductase subunit 6, chloroplastic (176 aa).

Transmembrane regions (helical) follow at residues Ile-10–Thr-30, Pro-32–Pro-52, Ala-61–Met-81, Leu-92–Ile-112, and Phe-152–Ser-172.

Belongs to the complex I subunit 6 family. In terms of assembly, NDH is composed of at least 16 different subunits, 5 of which are encoded in the nucleus.

The protein resides in the plastid. It localises to the chloroplast thylakoid membrane. The catalysed reaction is a plastoquinone + NADH + (n+1) H(+)(in) = a plastoquinol + NAD(+) + n H(+)(out). The enzyme catalyses a plastoquinone + NADPH + (n+1) H(+)(in) = a plastoquinol + NADP(+) + n H(+)(out). Its function is as follows. NDH shuttles electrons from NAD(P)H:plastoquinone, via FMN and iron-sulfur (Fe-S) centers, to quinones in the photosynthetic chain and possibly in a chloroplast respiratory chain. The immediate electron acceptor for the enzyme in this species is believed to be plastoquinone. Couples the redox reaction to proton translocation, and thus conserves the redox energy in a proton gradient. This is NAD(P)H-quinone oxidoreductase subunit 6, chloroplastic (ndhG) from Liriodendron tulipifera (Tuliptree).